A 111-amino-acid polypeptide reads, in one-letter code: MSTEIDQPFVVEEILTIIKEAVEISLQNTVYQHKQVPQWTQSIIDHSLKKISELNNKSYKYIVNCLIFQKTGAGFHTASSCLWDSANDGSCSYRWENKSMHCIISVFGCKI.

Belongs to the dynein light chain Tctex-type family.

Its subcellular location is the cytoplasm. The protein resides in the cytoskeleton. Its function is as follows. Acts as a non-catalytic accessory component of a dynein complex. The sequence is that of Dynein light chain Tctex-type (dlcA) from Dictyostelium discoideum (Social amoeba).